We begin with the raw amino-acid sequence, 432 residues long: Phosphomethylpyrimidine synthase (432 aa).

Residues Asn-69, Met-98, Tyr-127, His-163, 185–187, 226–229, and Glu-265 contribute to the substrate site; these read SRG and DACR. His-269 is a binding site for Zn(2+). A substrate-binding site is contributed by Tyr-292. His-333 serves as a coordination point for Zn(2+). [4Fe-4S] cluster contacts are provided by Cys-409, Cys-412, and Cys-416.

The protein belongs to the ThiC family. It depends on [4Fe-4S] cluster as a cofactor.

It carries out the reaction 5-amino-1-(5-phospho-beta-D-ribosyl)imidazole + S-adenosyl-L-methionine = 4-amino-2-methyl-5-(phosphooxymethyl)pyrimidine + CO + 5'-deoxyadenosine + formate + L-methionine + 3 H(+). It functions in the pathway cofactor biosynthesis; thiamine diphosphate biosynthesis. Its function is as follows. Catalyzes the synthesis of the hydroxymethylpyrimidine phosphate (HMP-P) moiety of thiamine from aminoimidazole ribotide (AIR) in a radical S-adenosyl-L-methionine (SAM)-dependent reaction. This is Phosphomethylpyrimidine synthase from Pelotomaculum thermopropionicum (strain DSM 13744 / JCM 10971 / SI).